A 310-amino-acid chain; its full sequence is Glucan endo-1,3-beta-glucosidase GI (310 aa).

E96 functions as the Proton donor in the catalytic mechanism. E234 acts as the Nucleophile in catalysis.

The protein belongs to the glycosyl hydrolase 17 family. Monomer. Young leaves and roots.

The enzyme catalyses Hydrolysis of (1-&gt;3)-beta-D-glucosidic linkages in (1-&gt;3)-beta-D-glucans.. Its function is as follows. May provide a degree of protection against microbial invasion of germinated barley grain through its ability to degrade fungal cell wall polysaccharides. Does not hydrolyze (1,3;1,4)-beta-D-glucans, (1,6)-beta-D-glucan, CM-cellulose, insoluble (1,3)-beta-D-glucans or aryl beta-D-glycosides. The sequence is that of Glucan endo-1,3-beta-glucosidase GI from Hordeum vulgare (Barley).